The sequence spans 899 residues: MARKDKDNGPEFVPLTNRSHRSSASFSSTDSLSSDGSLFGDDDVNALHSQKITRTQLPEENPYRDDDVELERGDNIFSRPTENSKRNRGSRLIWVVGLLCLGGWILAFVLFWGRRNSELSSSIAAVHGADSATGSTSYGKPLTLDGVLNGSWGRRRHSISWVAGPNGQDGLLLERDEDEKKAYLRVESIHSRQNQTDAREGWVLMESGAFAVNGKSLQPSATWPSPDFKSVLVAANAVSNWRHSFTATYWLFDVDTQTAQPLDPDEPKGRIQLASWSPQSDAVVFTRDNNLYLRKLDSDKVSQLTKDGGKDVFNGVPDWVYEEEVFGTDSTTWWSKDGKYVAFLRTNESMVPEFPIEYYMSRPSGKKPPAGLDKYPDVRKIKYPKAGSPNPVVTLQFYDIENAEVFSVNVSGGFADDDRLITEVVWASSGKVLVKEFNRESDVIRTVLIDVPSRTGELVRVDNFAQDDGGWAEVTQSTTFIPADPANGRPDDGYIDIIVHDGYDHWGYFTPVNNSVPVLLTSGPWEVVDTEPAVDLANNIVYFVASKESPTQRHVYSVKLDGSDLQPLTDVTKAGYYDASFSIGGGYVLLSYDGPRVPWQKVINTPSNQNPFEEIIEQNEQLSKMIEKYALPAEIYQNITIDNVTLQVVERRPPHFNPVKKYPVLFWLYGGPGSQSVDRRFSVDFQSYVASTLGYIVVTVDGRGTGHIGRAARTIVRGNLGYWEARDQIETAKAWAKKPYVDKDHIAIWGWSYGGFMTLKTLEQDAGQTFQYGMAVSPVTDWRFYDSIYTERYMHTPEHNPTGYEHSAISNMTALQQNVRFLVMHGTADDNVHFQNTLSLIDKLDMAGVENYDVHVYPDSDHSIYFHNAHKMVYDRLSSWLVTAFTDGWQQGNSVLPVT.

2 disordered regions span residues 1–37 (MARK…SDGS) and 51–84 (KITR…TENS). The Cytoplasmic segment spans residues 1 to 91 (MARKDKDNGP…ENSKRNRGSR (91 aa)). A compositionally biased stretch (low complexity) spans 22–37 (SSASFSSTDSLSSDGS). Positions 61–74 (NPYRDDDVELERGD) are enriched in basic and acidic residues. A helical; Signal-anchor for type II membrane protein transmembrane segment spans residues 92-112 (LIWVVGLLCLGGWILAFVLFW). The Vacuolar segment spans residues 113 to 899 (GRRNSELSSS…QQGNSVLPVT (787 aa)). N-linked (GlcNAc...) asparagine glycosylation is found at Asn149, Asn194, Asn347, Asn409, Asn513, Asn638, and Asn643. The active-site Charge relay system is Ser752. N-linked (GlcNAc...) asparagine glycosylation occurs at Asn811. Active-site charge relay system residues include Asp829 and His862.

This sequence belongs to the peptidase S9B family.

It localises to the vacuole membrane. The catalysed reaction is Release of an N-terminal dipeptide, Xaa-Yaa-|-Zaa-, from a polypeptide, preferentially when Yaa is Pro, provided Zaa is neither Pro nor hydroxyproline.. Functionally, type IV dipeptidyl-peptidase which removes N-terminal dipeptides sequentially from polypeptides having unsubstituted N-termini provided that the penultimate residue is proline. The chain is Probable dipeptidyl-aminopeptidase B (dapB) from Talaromyces marneffei (strain ATCC 18224 / CBS 334.59 / QM 7333) (Penicillium marneffei).